A 681-amino-acid chain; its full sequence is Potassium-transporting ATPase ATP-binding subunit (681 aa).

The next 4 helical transmembrane spans lie at 30-50, 59-79, 216-236, and 255-275; these read LLVYVGAILATSLYFLGFFGI, LAIALILWFTVLFANFAEAIA, ILLVTLSIIFLTVSATLLPFT, and IALLVCLAPTTIGALLSSIGI. The active-site 4-aspartylphosphate intermediate is aspartate 306. ATP contacts are provided by residues aspartate 343, glutamate 347, 376 to 383, and lysine 394; that span reads FTATTRMS. Residues aspartate 517 and aspartate 521 each coordinate Mg(2+). The next 3 membrane-spanning stretches (helical) occupy residues 587 to 607, 615 to 635, and 661 to 681; these read FAIIPVLFYGIFPQLEALNLM, AILSAIIYNAVIIIILIPLSL, and LIAPFIAIKLIDMLLTVLGIV.

It belongs to the cation transport ATPase (P-type) (TC 3.A.3) family. Type IA subfamily. The system is composed of three essential subunits: KdpA, KdpB and KdpC.

It is found in the cell membrane. The enzyme catalyses K(+)(out) + ATP + H2O = K(+)(in) + ADP + phosphate + H(+). Its function is as follows. Part of the high-affinity ATP-driven potassium transport (or Kdp) system, which catalyzes the hydrolysis of ATP coupled with the electrogenic transport of potassium into the cytoplasm. This subunit is responsible for energy coupling to the transport system and for the release of the potassium ions to the cytoplasm. This is Potassium-transporting ATPase ATP-binding subunit from Listeria monocytogenes serotype 4a (strain HCC23).